Consider the following 278-residue polypeptide: Biotin synthase (278 aa).

The Radical SAM core domain occupies 1–227 (MQIMLCAISN…NAHIMVAGGR (227 aa)). 3 residues coordinate [4Fe-4S] cluster: Cys16, Cys20, and Cys23. The [2Fe-2S] cluster site is built by Cys60, Cys95, and Cys153.

This sequence belongs to the radical SAM superfamily. Biotin synthase family. As to quaternary structure, homodimer. [4Fe-4S] cluster is required as a cofactor. It depends on [2Fe-2S] cluster as a cofactor.

The catalysed reaction is (4R,5S)-dethiobiotin + (sulfur carrier)-SH + 2 reduced [2Fe-2S]-[ferredoxin] + 2 S-adenosyl-L-methionine = (sulfur carrier)-H + biotin + 2 5'-deoxyadenosine + 2 L-methionine + 2 oxidized [2Fe-2S]-[ferredoxin]. It participates in cofactor biosynthesis; biotin biosynthesis; biotin from 7,8-diaminononanoate: step 2/2. In terms of biological role, catalyzes the conversion of dethiobiotin (DTB) to biotin by the insertion of a sulfur atom into dethiobiotin via a radical-based mechanism. This is Biotin synthase from Campylobacter lari (strain RM2100 / D67 / ATCC BAA-1060).